We begin with the raw amino-acid sequence, 115 residues long: MRYVASYLLAALGGNSSPSAKDIKKILDSVGIEADDDRLNKVISELHGKNIEDVIAQGIGKLASVPAGGAVAVSAAPGSAAPAAGSAPAAAEEKKEEKKEESEESDDDMGFGLFD.

Position 1 is an N-acetylmethionine (Met-1). Phosphoserine occurs at positions 17 and 19. Lys-21 carries the N6-acetyllysine; alternate modification. Lys-21 bears the N6-succinyllysine; alternate mark. Low complexity predominate over residues 76 to 90 (APGSAAPAAGSAPAA). Residues 76–115 (APGSAAPAAGSAPAAAEEKKEEKKEESEESDDDMGFGLFD) are disordered. Ser-79 and Ser-86 each carry phosphoserine. Residues 91–101 (AEEKKEEKKEE) show a composition bias toward basic and acidic residues. A phosphoserine mark is found at Ser-102 and Ser-105.

It belongs to the eukaryotic ribosomal protein P1/P2 family. In terms of assembly, heterodimer with RPLP1 at the lateral ribosomal stalk of the large ribosomal subunit.

Plays an important role in the elongation step of protein synthesis. The sequence is that of Large ribosomal subunit protein P2 (RPLP2) from Bos taurus (Bovine).